We begin with the raw amino-acid sequence, 697 residues long: PHD finger protein At2g01810 (697 aa).

Disordered regions lie at residues 319 to 362 (DENS…QYYS) and 457 to 478 (EQKR…TSTT). A compositionally biased stretch (basic and acidic residues) spans 339-349 (SGRDTVLDDHN). The segment at 635–685 (TVDCKCGARDDDGERMVACDACKVWHHTLCNSIEDDEAVPSVFLCNMCYGD) adopts a PHD-type zinc-finger fold.

Its subcellular location is the nucleus. This is PHD finger protein At2g01810 from Arabidopsis thaliana (Mouse-ear cress).